A 575-amino-acid polypeptide reads, in one-letter code: Golgi-associated kinase 1A (575 aa).

The signal sequence occupies residues methionine 1 to alanine 29. A propeptide spans valine 30 to arginine 119 (removed in mature form). The tract at residues threonine 53–threonine 58 is O-glycosylated at one site. The segment covering valine 143–histidine 153 has biased composition (basic and acidic residues). Residues valine 143–glutamate 162 are disordered. A propeptide spans arginine 437–proline 575 (removed in mature form). Asparagine 566 is a glycosylation site (N-linked (GlcNAc...) asparagine).

The protein belongs to the GASK family. O-glycosylated with core 1 or possibly core 8 glycans. In terms of processing, proteolytically cleaved. Cleaved at Arg-120 and Arg-437 leading to a processed mature product of 35 kDa. The cleavage takes place in the Golgi apparatus. In terms of tissue distribution, expressed in skin, lung and colon (at protein level).

It localises to the secreted. It is found in the endoplasmic reticulum. Its subcellular location is the golgi apparatus. The protein resides in the membrane. The protein localises to the caveola. This is Golgi-associated kinase 1A from Homo sapiens (Human).